Consider the following 445-residue polypeptide: MTEYLSVSALTKYIKYKFDQDPHLQSVLIKGELSNFKKHSSGHLYFNVKDKESVISGMMFKGNASKLGFEPKEGDEVLIEARVSVYERRGNYQIYVNKMQLDGIGNLYQKLELLKKKLKKEGYFDQSNKKLIPKYPKKIAVLTASTGAAIRDIHSTINNRYPLVEQIQISTLVQGTQARQDIIEKIQYADSLDVDTIIVGRGGGSIEDLWNFNEEDVVKTIFNCQTPIISAVGHETDFTLSDFVADVRAATPTQAAVIATPDQYELLQQIKQYEYTLSRYIKQYIEHQKKQLNHISSYYKFKQPSLLYDQQIQKRDELERQLNHLLNTKVEKSKHHLKLLQQSFNFKNLNQQITQEKQSIYQLHSRLSKIMSNNITNLKTVLKNKLESLNNLSPTNTMLRGYAIVNKDNEVVTSTHKLNENDQISLTMKDGSVDATVKKVRCNDE.

It belongs to the XseA family. In terms of assembly, heterooligomer composed of large and small subunits.

The protein resides in the cytoplasm. It carries out the reaction Exonucleolytic cleavage in either 5'- to 3'- or 3'- to 5'-direction to yield nucleoside 5'-phosphates.. In terms of biological role, bidirectionally degrades single-stranded DNA into large acid-insoluble oligonucleotides, which are then degraded further into small acid-soluble oligonucleotides. This Staphylococcus epidermidis (strain ATCC 35984 / DSM 28319 / BCRC 17069 / CCUG 31568 / BM 3577 / RP62A) protein is Exodeoxyribonuclease 7 large subunit.